An 86-amino-acid chain; its full sequence is Large ribosomal subunit protein bL27 (86 aa).

Positions 1–24 (MAHKKAGGSTRNGRDSESKRLGVK) are disordered.

It belongs to the bacterial ribosomal protein bL27 family.

The protein is Large ribosomal subunit protein bL27 of Alcanivorax borkumensis (strain ATCC 700651 / DSM 11573 / NCIMB 13689 / SK2).